The sequence spans 390 residues: GTPase Obg (390 aa).

Positions Met-1–Leu-159 constitute an Obg domain. The disordered stretch occupies residues Asn-127–Gly-147. Polar residues predominate over residues Arg-129–Thr-145. Residues Ala-160–Ile-333 form the OBG-type G domain. GTP is bound by residues Gly-166–Ser-173, Phe-191–Val-195, Asp-213–Gly-216, Asn-283–Asp-286, and Ser-314–Ala-316. Mg(2+) contacts are provided by Ser-173 and Thr-193.

The protein belongs to the TRAFAC class OBG-HflX-like GTPase superfamily. OBG GTPase family. As to quaternary structure, monomer. The cofactor is Mg(2+).

It localises to the cytoplasm. An essential GTPase which binds GTP, GDP and possibly (p)ppGpp with moderate affinity, with high nucleotide exchange rates and a fairly low GTP hydrolysis rate. Plays a role in control of the cell cycle, stress response, ribosome biogenesis and in those bacteria that undergo differentiation, in morphogenesis control. The chain is GTPase Obg from Escherichia coli (strain K12 / DH10B).